Reading from the N-terminus, the 1258-residue chain is Non-secreted LysM effector LysM19 (1258 aa).

The interval 148–168 (VTQSLPNISSHEKRDDHEGNS) is disordered. The span at 157 to 168 (SHEKRDDHEGNS) shows a compositional bias: basic and acidic residues. 2 LysM domains span residues 1028–1073 (IVYT…SICL) and 1179–1227 (RWHV…AYCT).

This sequence belongs to the secreted LysM effector family.

In terms of biological role, non-secreted LysM effector that might be involved in manipulation of host defenses for successful infection. The chain is Non-secreted LysM effector LysM19 from Penicillium expansum (Blue mold rot fungus).